Reading from the N-terminus, the 767-residue chain is Cilium assembly protein DZIP1L (767 aa).

The interval 122-144 (QQRGQQELGRQADELKGVREESR) is disordered. Residues 131 to 144 (RQADELKGVREESR) are compositionally biased toward basic and acidic residues. The C2H2-type zinc finger occupies 166–189 (HTCHLCDKTFMNATFLRGHIQRRH). Residues 205-406 (VEEVLEELRA…SQEEMIQSLS (202 aa)) adopt a coiled-coil conformation. At serine 426 the chain carries Phosphoserine. Positions 518–767 (SRAKERQENG…SSGQPRVPAW (250 aa)) are disordered. Composition is skewed to polar residues over residues 533 to 547 (PDGQPSVKSQQSTLV) and 574 to 588 (RQSHGSHGSSLTQVS). Low complexity predominate over residues 607–616 (GPGMSTPPFS). The span at 658–675 (ENAQPPGQGSGTLVQSMV) shows a compositional bias: polar residues. Positions 677-686 (NLEKQLEAPA) are enriched in basic and acidic residues.

Belongs to the DZIP C2H2-type zinc-finger protein family. As to quaternary structure, interacts with SEPTIN2.

It localises to the cytoplasm. Its subcellular location is the cytoskeleton. The protein resides in the cilium basal body. The protein localises to the microtubule organizing center. It is found in the centrosome. It localises to the centriole. Functionally, involved in primary cilium formation. Probably acts as a transition zone protein required for localization of PKD1/PC1 and PKD2/PC2 to the ciliary membrane. The sequence is that of Cilium assembly protein DZIP1L from Homo sapiens (Human).